A 346-amino-acid polypeptide reads, in one-letter code: D-alanine--D-alanine ligase (346 aa).

One can recognise an ATP-grasp domain in the interval 134 to 340 (KFLAESLGVK…IDYTYIHSIQ (207 aa)). 161-212 (EYPVIIKPVRLGSSIGVSIVKSEAELDYALDVAFEFDNDVIVEPFIDGVKEF) is an ATP binding site. Mg(2+)-binding residues include aspartate 284, glutamate 296, and asparagine 298.

It belongs to the D-alanine--D-alanine ligase family. It depends on Mg(2+) as a cofactor. The cofactor is Mn(2+).

Its subcellular location is the cytoplasm. It catalyses the reaction 2 D-alanine + ATP = D-alanyl-D-alanine + ADP + phosphate + H(+). It participates in cell wall biogenesis; peptidoglycan biosynthesis. Cell wall formation. The protein is D-alanine--D-alanine ligase of Sulfurovum sp. (strain NBC37-1).